A 251-amino-acid chain; its full sequence is Tyrosine phosphatase-like protein J3 (251 aa).

In terms of domain architecture, Tyrosine-protein phosphatase spans 26–251 (IADEYYTIVP…PVLQNSKRRE (226 aa)).

Belongs to the protein-tyrosine phosphatase family.

The protein is Tyrosine phosphatase-like protein J3 (J4) of Microplitis demolitor (Parasitoid wasp).